A 158-amino-acid polypeptide reads, in one-letter code: Endoribonuclease YbeY (158 aa).

3 residues coordinate Zn(2+): histidine 124, histidine 128, and histidine 134.

The protein belongs to the endoribonuclease YbeY family. Zn(2+) is required as a cofactor.

It is found in the cytoplasm. Single strand-specific metallo-endoribonuclease involved in late-stage 70S ribosome quality control and in maturation of the 3' terminus of the 16S rRNA. The polypeptide is Endoribonuclease YbeY (Caldicellulosiruptor bescii (strain ATCC BAA-1888 / DSM 6725 / KCTC 15123 / Z-1320) (Anaerocellum thermophilum)).